The sequence spans 86 residues: ATP synthase subunit c (86 aa).

The next 2 helical transmembrane spans lie at 4 to 24 (AIVAAASAIGAGIAVATGIGA) and 57 to 77 (VAIAESSAIYGLVISIILLFV).

The protein belongs to the ATPase C chain family. In terms of assembly, F-type ATPases have 2 components, F(1) - the catalytic core - and F(0) - the membrane proton channel. F(1) has five subunits: alpha(3), beta(3), gamma(1), delta(1), epsilon(1). F(0) has three main subunits: a(1), b(2) and c(10-14). The alpha and beta chains form an alternating ring which encloses part of the gamma chain. F(1) is attached to F(0) by a central stalk formed by the gamma and epsilon chains, while a peripheral stalk is formed by the delta and b chains.

The protein resides in the cell membrane. Its function is as follows. F(1)F(0) ATP synthase produces ATP from ADP in the presence of a proton or sodium gradient. F-type ATPases consist of two structural domains, F(1) containing the extramembraneous catalytic core and F(0) containing the membrane proton channel, linked together by a central stalk and a peripheral stalk. During catalysis, ATP synthesis in the catalytic domain of F(1) is coupled via a rotary mechanism of the central stalk subunits to proton translocation. Key component of the F(0) channel; it plays a direct role in translocation across the membrane. A homomeric c-ring of between 10-14 subunits forms the central stalk rotor element with the F(1) delta and epsilon subunits. In Clostridioides difficile (strain 630) (Peptoclostridium difficile), this protein is ATP synthase subunit c.